The following is a 317-amino-acid chain: Ribosomal protein L11 methyltransferase (317 aa).

S-adenosyl-L-methionine is bound by residues Thr158, Gly179, Asp201, and Asn244.

This sequence belongs to the methyltransferase superfamily. PrmA family.

It is found in the cytoplasm. It carries out the reaction L-lysyl-[protein] + 3 S-adenosyl-L-methionine = N(6),N(6),N(6)-trimethyl-L-lysyl-[protein] + 3 S-adenosyl-L-homocysteine + 3 H(+). Functionally, methylates ribosomal protein L11. In Streptococcus agalactiae serotype Ia (strain ATCC 27591 / A909 / CDC SS700), this protein is Ribosomal protein L11 methyltransferase.